A 70-amino-acid chain; its full sequence is uncharacterized protein (70 aa).

A run of 2 helical transmembrane segments spans residues 13–33 (YYAF…LLGF) and 39–59 (QTYA…GLII).

The protein localises to the cell membrane. This is an uncharacterized protein from Escherichia coli O6:H1 (strain CFT073 / ATCC 700928 / UPEC).